The chain runs to 379 residues: UDP-4-amino-4-deoxy-L-arabinose--oxoglutarate aminotransferase (379 aa).

N6-(pyridoxal phosphate)lysine is present on K182.

The protein belongs to the DegT/DnrJ/EryC1 family. ArnB subfamily. As to quaternary structure, homodimer. It depends on pyridoxal 5'-phosphate as a cofactor.

It carries out the reaction UDP-4-amino-4-deoxy-beta-L-arabinose + 2-oxoglutarate = UDP-beta-L-threo-pentopyranos-4-ulose + L-glutamate. It participates in nucleotide-sugar biosynthesis; UDP-4-deoxy-4-formamido-beta-L-arabinose biosynthesis; UDP-4-deoxy-4-formamido-beta-L-arabinose from UDP-alpha-D-glucuronate: step 2/3. It functions in the pathway bacterial outer membrane biogenesis; lipopolysaccharide biosynthesis. Its function is as follows. Catalyzes the conversion of UDP-4-keto-arabinose (UDP-Ara4O) to UDP-4-amino-4-deoxy-L-arabinose (UDP-L-Ara4N). The modified arabinose is attached to lipid A and is required for resistance to polymyxin and cationic antimicrobial peptides. This chain is UDP-4-amino-4-deoxy-L-arabinose--oxoglutarate aminotransferase, found in Shigella boydii serotype 4 (strain Sb227).